Reading from the N-terminus, the 570-residue chain is Urease subunit alpha (570 aa).

The region spanning 131–570 is the Urease domain; it reads GGFDAHIHFI…LPMAQRYFLF (440 aa). Ni(2+) is bound by residues His-136, His-138, and Lys-219. Lys-219 carries the N6-carboxylysine modification. His-221 lines the substrate pocket. Ni(2+) is bound by residues His-248 and His-274. His-322 acts as the Proton donor in catalysis. Asp-362 lines the Ni(2+) pocket.

It belongs to the metallo-dependent hydrolases superfamily. Urease alpha subunit family. In terms of assembly, heterotrimer of UreA (gamma), UreB (beta) and UreC (alpha) subunits. Three heterotrimers associate to form the active enzyme. Requires Ni cation as cofactor. Post-translationally, carboxylation allows a single lysine to coordinate two nickel ions.

It is found in the cytoplasm. The catalysed reaction is urea + 2 H2O + H(+) = hydrogencarbonate + 2 NH4(+). The protein operates within nitrogen metabolism; urea degradation; CO(2) and NH(3) from urea (urease route): step 1/1. The sequence is that of Urease subunit alpha from Chelativorans sp. (strain BNC1).